A 181-amino-acid chain; its full sequence is Transcription termination/antitermination protein NusG (181 aa).

The KOW domain occupies 130-161; sequence PGELVRVSDGPFADFNGVVEEVDYEKSRLKVS.

The protein belongs to the NusG family. Monomer. Interacts with the transcription termination factor Rho and with RNA polymerase.

Its function is as follows. Participates in transcription elongation, termination and antitermination. In the absence of Rho, increases the rate of transcription elongation by the RNA polymerase (RNAP), probably by partially suppressing pausing. In the presence of Rho, modulates most Rho-dependent termination events by interacting with the RNAP to render the complex more susceptible to the termination activity of Rho. May be required to overcome a kinetic limitation of Rho to function at certain terminators. Also involved in ribosomal RNA transcriptional antitermination. The sequence is that of Transcription termination/antitermination protein NusG from Yersinia pestis.